The following is a 325-amino-acid chain: Lipoyl synthase (325 aa).

Residues 1–33 (MATVIDTLKARGSEDRAARHPEKQNRPDTPVLR) are disordered. The span at 8-33 (LKARGSEDRAARHPEKQNRPDTPVLR) shows a compositional bias: basic and acidic residues. Residues Cys64, Cys69, Cys75, Cys90, Cys94, Cys97, and Ser303 each contribute to the [4Fe-4S] cluster site. Residues 76 to 292 (WSQKHATMMI…EAIARAKGFL (217 aa)) enclose the Radical SAM core domain.

It belongs to the radical SAM superfamily. Lipoyl synthase family. [4Fe-4S] cluster is required as a cofactor.

It is found in the cytoplasm. The catalysed reaction is [[Fe-S] cluster scaffold protein carrying a second [4Fe-4S](2+) cluster] + N(6)-octanoyl-L-lysyl-[protein] + 2 oxidized [2Fe-2S]-[ferredoxin] + 2 S-adenosyl-L-methionine + 4 H(+) = [[Fe-S] cluster scaffold protein] + N(6)-[(R)-dihydrolipoyl]-L-lysyl-[protein] + 4 Fe(3+) + 2 hydrogen sulfide + 2 5'-deoxyadenosine + 2 L-methionine + 2 reduced [2Fe-2S]-[ferredoxin]. Its pathway is protein modification; protein lipoylation via endogenous pathway; protein N(6)-(lipoyl)lysine from octanoyl-[acyl-carrier-protein]: step 2/2. Catalyzes the radical-mediated insertion of two sulfur atoms into the C-6 and C-8 positions of the octanoyl moiety bound to the lipoyl domains of lipoate-dependent enzymes, thereby converting the octanoylated domains into lipoylated derivatives. The polypeptide is Lipoyl synthase (Caulobacter vibrioides (strain ATCC 19089 / CIP 103742 / CB 15) (Caulobacter crescentus)).